A 60-amino-acid polypeptide reads, in one-letter code: Large ribosomal subunit protein uL30 (60 aa).

This sequence belongs to the universal ribosomal protein uL30 family. As to quaternary structure, part of the 50S ribosomal subunit.

The protein is Large ribosomal subunit protein uL30 of Azoarcus sp. (strain BH72).